Here is a 101-residue protein sequence, read N- to C-terminus: Ubiquitin-related modifier 1 homolog (101 aa).

Residue G101 is modified to 1-thioglycine. Residue G101 forms a Glycyl lysine isopeptide (Gly-Lys) (interchain with K-? in acceptor proteins) linkage.

Belongs to the URM1 family. As to quaternary structure, interacts with cer. In terms of processing, C-terminal thiocarboxylation occurs in 2 steps, it is first acyl-adenylated (-COAMP) via the hesA/moeB/thiF part of the MOCS3 homolog, then thiocarboxylated (-COSH) via the rhodanese domain of the MOCS3 homolog.

The protein resides in the cytoplasm. The protein operates within tRNA modification; 5-methoxycarbonylmethyl-2-thiouridine-tRNA biosynthesis. Its function is as follows. Acts as a sulfur carrier required for 2-thiolation of mcm(5)S(2)U at tRNA wobble positions of cytosolic tRNA(Lys), tRNA(Glu) and tRNA(Gln). Serves as sulfur donor in tRNA 2-thiolation reaction by being thiocarboxylated (-COSH) at its C-terminus by MOCS3. The sulfur is then transferred to tRNA to form 2-thiolation of mcm(5)S(2)U. Also acts as a ubiquitin-like protein (UBL) that is covalently conjugated via an isopeptide bond to lysine residues of target proteins such as Prx2/Jafrac1, Ciao1, Eip71CD and GILT1. The thiocarboxylated form serves as substrate for conjugation and oxidative stress specifically induces the formation of UBL-protein conjugates. This chain is Ubiquitin-related modifier 1 homolog, found in Drosophila sechellia (Fruit fly).